The primary structure comprises 156 residues: Ribosomal RNA large subunit methyltransferase H (156 aa).

Residues L73, G104, and 123 to 128 (VSSLTL) each bind S-adenosyl-L-methionine.

The protein belongs to the RNA methyltransferase RlmH family. Homodimer.

The protein resides in the cytoplasm. The enzyme catalyses pseudouridine(1915) in 23S rRNA + S-adenosyl-L-methionine = N(3)-methylpseudouridine(1915) in 23S rRNA + S-adenosyl-L-homocysteine + H(+). Functionally, specifically methylates the pseudouridine at position 1915 (m3Psi1915) in 23S rRNA. This is Ribosomal RNA large subunit methyltransferase H from Paraburkholderia phymatum (strain DSM 17167 / CIP 108236 / LMG 21445 / STM815) (Burkholderia phymatum).